Here is a 381-residue protein sequence, read N- to C-terminus: L-lactate dehydrogenase (381 aa).

The FMN hydroxy acid dehydrogenase domain occupies 1–380 (MIISASTDYR…NRDSLAVSER (380 aa)). Tyr-24 lines the substrate pocket. 2 residues coordinate FMN: Ser-106 and Gln-127. A substrate-binding site is contributed by Tyr-129. Thr-155 contributes to the FMN binding site. Residue Arg-164 coordinates substrate. Lys-251 is an FMN binding site. The active-site Proton acceptor is His-275. Arg-278 is a binding site for substrate. An FMN-binding site is contributed by 306 to 330 (DSGIRTGLDVVRMIALGADSVLLGR).

Belongs to the FMN-dependent alpha-hydroxy acid dehydrogenase family. The cofactor is FMN.

The protein localises to the cell inner membrane. It catalyses the reaction (S)-lactate + A = pyruvate + AH2. Its function is as follows. Catalyzes the conversion of L-lactate to pyruvate. Is coupled to the respiratory chain. This chain is L-lactate dehydrogenase, found in Yersinia pseudotuberculosis serotype O:1b (strain IP 31758).